Reading from the N-terminus, the 401-residue chain is MDRRRMPLWALLLLWSPCTFSLPTGTTFERIPLKKMPSVREILEERGVDMTRLSAEWDVFTKRSSLTDLISPVVLTNYLNSQYYGEIGIGTPPQTFKVIFDTGSANLWVPSTKCSRLYLACGIHSLYESSDSSSYMENGDDFTIHYGSGRVKGFLSQDSVTVGGITVTQTFGEVTELPLIPFMLAQFDGVLGMGFPAQAVGGVTPVFDHILSQGVLKEKVFSVYYNRGPHLLGGEVVLGGSDPEHYQGDFHYVSLSKTDSWQITMKGVSVGSSTLLCEEGCEVVVDTGSSFISAPTSSLKLIMQALGAKEKRLHEYVVSCSQVPTLPDISFNLGGRAYTLSSTDYVLQYPNRRDKLCTVALHAMDIPPPTGPVWVLGATFIRKFYTEFDRHNNRIGFALAR.

The first 25 residues, 1 to 25 (MDRRRMPLWALLLLWSPCTFSLPTG), serve as a signal peptide directing secretion. Residues 26–63 (TTFERIPLKKMPSVREILEERGVDMTRLSAEWDVFTKR) constitute a propeptide, activation peptide. One can recognise a Peptidase A1 domain in the interval 83-398 (YYGEIGIGTP…DRHNNRIGFA (316 aa)). The active site involves D101. Intrachain disulfides connect C114/C121 and C277/C281. D286 is an active-site residue. C320 and C357 are oxidised to a cystine.

It belongs to the peptidase A1 family. Dimer of a heavy chain and a light chain joined by a disulfide bond. In terms of tissue distribution, submandibular gland.

Its subcellular location is the secreted. The enzyme catalyses Cleavage of Leu-|-Xaa bond in angiotensinogen to generate angiotensin I.. Renin is a highly specific endopeptidase, related to pepsin, whose only known function is to generate angiotensin I from angiotensinogen in the plasma, initiating a cascade of reactions that produce an elevation of blood pressure and increased sodium retention by the kidney. In Mus musculus (Mouse), this protein is Renin-2.